The sequence spans 685 residues: Protein argonaute (685 aa).

The segment at 1-99 is N-terminal domain; that stretch reads MNHLGKTEVF…LYPKGRRPLD (99 aa). The segment at 100 to 176 is linker L1; sequence PKDPGERSVL…VDPAYRILCE (77 aa). Positions 169 to 265 constitute a PAZ domain; that stretch reads PAYRILCEMS…HLTGLLVPVL (97 aa). The interval 272–337 is linker L2; it reads EEEGSLALSL…SKPADALRVG (66 aa). Residues 338-463 are mid domain; that stretch reads FYRAQETALA…LLAKAGLQVV (126 aa). A PIWI domain region spans residues 464–685; it reads ALSGAYPAEL…EVDREKLFFV (222 aa). Catalysis depends on residues Asp-478, Glu-512, Asp-546, and Asp-660. Position 478 (Asp-478) interacts with Mn(2+). The Piwi domain maps to 507–671; sequence EAQAGERIPQ…LVKEVGRLGI (165 aa). Residues Asp-546, Asp-660, and Val-685 each coordinate Mn(2+).

This sequence belongs to the argonaute family. Long pAgo subfamily. Coimmunoprecipitates with a number of proteins involved in DNA replication or recombination including RepA (initiates replication), AddA/B (TT_C0638 and TT_C0639), ArgR, GyrA/B, HU (TT_C0984), PriA, Rad52 (TT_C1923), RecJ, SSB, TopA and UvrB. Most proteins remain associated with TtAgo after DNase treatment and associate with catalytically inactive protein. Mn(2+) is required as a cofactor.

Its function is as follows. A DNA-guided ssDNA endonuclease. Uses short ssDNA sequences as guides (gDNA, also called small interfering DNA, siDNA) to bind complementary DNA target strands, resulting in cleavage of the target DNA (tDNA). The cleavage site is 10 nucleotides (nt) downstream of the target residue base-paired with the 5'-end of the gDNA. Plays a role in completion of DNA replication, participates in decatenating replicated DNA and plasmid. In situ purifies with 5'-phosphorylated long DNA (about 1160 nt, maps to the whole chromosome and plasmid), 25-35 nt RNAs that map to the whole chromosome and 15-18 nt DNA that maps to the replication terminus region (ter) on the chromosome and plasmid. Most short DNA starts with dC. Has been shown to have guide sequence-independent dsDNase activity called 'chopping', which requires unstable DNA (high AT-content, multiple mismatches or low salt conditions), and could be used to generate gDNA. Preferentially binds tDNA with dC at its 3'-terminus. Has also been shown to have no detectable guide sequence-independent dsDNase activity. The latter study proposes TtAgo may acquire gDNA from nicked dsDNA, by binding to 5'-phosphorylated-dC nicks, then cleaving 10 nt away on the opposite strand; subsequently an exonuclease (maybe AddA-AddB helicase/nuclease) trims the ends to generate the gDNA. Functionally, involved in defense against invading mobile genetic elements. TtAgo interferes with plasmid DNA, stimulates expression of specific endogenous genes, including various CRISPR loci and at least part of the CRISPR adaptation machinery, but only when exogenous plasmid DNA is present. Upon purification from E.coli associates with gDNA 13-25 nt long with 5'-phosphorylated ends and with 10-150 nt RNA with 5'-OH. DNA corresponds to the expression plasmid rather than chromosomal DNA; 89% of gDNA starts with dC and 72% has dA in the second position. Endonucleolytically cleaves tDNA with 5'-phosphorylated gDNA but not 5'-phosphorylated gRNA; the active site is involved in processing or binding of ssDNA. Nicks or linearizes supercoiled plasmid target when it has the appropriate gDNA sequences, does not cleave linear tDNA. Positions 4 to 16 of the tDNA need to be base paired to the gDNA for efficient tDNA cleavage. Although the system can support single nucleotide insertions in either the gDNA or tDNA, in all cases cleavage activity is reduced, with a wide range of sequence- and position-specific effects. In terms of biological role, first characterized as a DNA-guided RNA endonuclease. Uses gDNA to bind complementary RNA target strands, resulting in cleavage of the target RNA. The cleavage site is 10 nucleotides (nt) downstream of the target residue base-paired with the 5'-end of the guide DNA. The protein is Protein argonaute of Thermus thermophilus (strain ATCC BAA-163 / DSM 7039 / HB27).